Here is a 153-residue protein sequence, read N- to C-terminus: MKIWVDADACPGPVRDIILRAGQRVKVHTVFVANHALSLPRLAYVSSVQVGAGLDVADRHIAQQAQPGDLAVTQDIPLAALLVPKGVVVLDPRGEVFTEENVAERLSVRNFMQELRESGVTTGGPDGYSAQDRQQFAGALDRELTRLVKTEPK.

This sequence belongs to the UPF0178 family.

In Myxococcus xanthus (strain DK1622), this protein is UPF0178 protein MXAN_5526.